The following is a 311-amino-acid chain: Homeobox protein CDX-2 (311 aa).

Phosphoserine is present on serine 60. The disordered stretch occupies residues 111–151; sequence EYHAHHHPHHHPHHPAASPSCASGLLQTLNLGPPGPAATAA. A compositionally biased stretch (basic residues) spans 114–124; sequence AHHHPHHHPHH. The interval 185–215 is interaction with DNA; the sequence is KDKYRVVYTDHQRLELEKEFHFSRYITIRRK. A DNA-binding region (homeobox) is located at residues 185–244; the sequence is KDKYRVVYTDHQRLELEKEFHFSRYITIRRKSELAATLGLSERQVKIWFQNRRAKERKIK. The interaction with 5-mCpG DNA stretch occupies residues 227–241; sequence RQVKIWFQNRRAKER. Positions 239–311 are disordered; it reads KERKIKKKQQ…GGVLNSTVTQ (73 aa). The segment covering 248-257 has biased composition (low complexity); that stretch reads QQQQQQQQQQ. Pro residues predominate over residues 258–268; it reads PPQPPPQPSQP. Serine 281 is modified (phosphoserine; by CDK2). Residues 281-293 carry the 4S motif; modulates transactivation activity and protein stability motif; the sequence is SPVTSLQGSVPGS. Residues 285-298 are compositionally biased toward low complexity; that stretch reads SLQGSVPGSVPGVL.

Belongs to the Caudal homeobox family. As to quaternary structure, can bind DNA as a monomer or homodimer. Ubiquitinated, leading to its degradation by the proteasome. In terms of processing, phosphorylation at Ser-60 reduces transactivation capacity. Phosphorylation at Ser-281 reduces transactivation capacity and increases ubiquitin-dependent proteasome degradation. In the intestine, detected in ileum and proximal and distal colon (at protein level). In adult small intestine, predominantly localized in crypt and lower villus cells of the epithelium (at protein level). Expressed in the intestine but not detected in other tissues including stomach, liver, kidney, spleen, brain, heart, lung, pancreas, skeletal muscle and testis. Expressed specifically in gut epithelium where it is not restricted to a particular cell lineage. Abundant expression is seen in the proximal colon with slightly lower levels in distal colon. Expression in the proximal colon is not restricted either to a particular cell lineage or stage of differentiation while in the distal colon it is more abundant in the differentiated cells towards the top of the crypt.

It localises to the nucleus. In terms of biological role, transcription factor which regulates the transcription of multiple genes expressed in the intestinal epithelium. Binds to the promoter of the intestinal sucrase-isomaltase SI and activates SI transcription. Binds to the DNA sequence 5'-ATAAAAACTTAT-3' in the promoter region of VDR and activates VDR transcription. Binds to and activates transcription of LPH. Activates transcription of CLDN2 and intestinal mucin MUC2. Binds to the 5'-AATTTTTTACAACACCT-3' DNA sequence in the promoter region of CA1 and activates CA1 transcription. Important in broad range of functions from early differentiation to maintenance of the intestinal epithelial lining of both the small and large intestine. Binds preferentially to methylated DNA. This is Homeobox protein CDX-2 (Cdx2) from Mus musculus (Mouse).